A 265-amino-acid polypeptide reads, in one-letter code: Sarcotoxin II-1 (265 aa).

The signal sequence occupies residues 1 to 22 (MKSFVLFAACMAIIALGSLAHA). A propeptide spans 23–24 (YP) (removed by a dipeptidylpeptidase). Glutamine 25 carries the post-translational modification Pyrrolidone carboxylic acid. Glycine 264 carries the post-translational modification Glycine amide.

This sequence belongs to the attacin/sarcotoxin-2 family. As to expression, synthesized by the fat body and is eventually secreted into the hemolymph.

It localises to the secreted. Functionally, sarcotoxin II is an antibacterial protein which plays a role in the inflammatory response of this insect. The main effect of sarcotoxin II on E.coli may be the inhibition of cell wall synthesis, including septum formation. This Sarcophaga peregrina (Flesh fly) protein is Sarcotoxin II-1.